A 315-amino-acid chain; its full sequence is Fucose-specific lectin (315 aa).

Tandem repeats lie at residues 2 to 53 (STPG…KNVI), 54 to 103 (GNAK…GGAK), 104 to 155 (FQVA…LGGA), 156 to 207 (LPGT…TIFD), 208 to 260 (RAPP…ITPV), and 261 to 315 (IQGS…LPPA). The 6 X approximate tandem repeats stretch occupies residues 2–315 (STPGAQQVLF…QLGRSALPPA (314 aa)). Positions 25, 37, 44, 73, 85, 94, 98, 126, 138, 146, 150, 177, 189, 198, 230, and 242 each coordinate alpha-L-fucose. The Zn(2+) site is built by cysteine 244, aspartate 246, and histidine 252. Positions 282 and 296 each coordinate alpha-L-fucose.

The protein belongs to the fungal fucose-specific lectin family. Homodimer.

Its function is as follows. Multispecific lectin that is able to recognize L-fucose in all possible linkages. These could be found not only in decomposed plant matter in soil, which is the natural environment for A.fumigatus, but also in various epitopes on human tissues. Mediates binding of A.fumigatus conidia to airway mucin in a fucose dependent manner. Stimulates IL-8 production by human bronchial cells in a dose-dependent manner, contributing to the inflammatory response observed upon the exposure of a patient to A.fumigatus, and thus might be an important virulence factor involved in an early stage of A.fumigatus infection. This Aspergillus fumigatus (strain ATCC MYA-4609 / CBS 101355 / FGSC A1100 / Af293) (Neosartorya fumigata) protein is Fucose-specific lectin.